Here is a 443-residue protein sequence, read N- to C-terminus: Dynein regulatory complex protein 9 (443 aa).

Disordered regions lie at residues 1–34 (MEED…TVEE) and 415–443 (GFKM…GKKK). Positions 393–422 (ELKSVIKLQAWWRGTMIRREIGGFKMPKDK) constitute an IQ domain. The segment covering 415-430 (GFKMPKDKVDSKDSKG) has biased composition (basic and acidic residues). Residues 431 to 443 (KGKGKDKRRGKKK) are compositionally biased toward basic residues.

This sequence belongs to the DRC9 family. Component of the nexin-dynein regulatory complex (N-DRC). Interacts (via IQ domain) with CALM when calcium levels are low. Does not interact with CALM in the presence of Ca(2+). Interacts with the HSP70 proteins HSPA1L and HSPA8. May form a complex with CAMK4 and HSP70.

The protein localises to the cytoplasm. It is found in the cell projection. It localises to the cilium. Its subcellular location is the flagellum. The protein resides in the cytoskeleton. The protein localises to the flagellum axoneme. In terms of biological role, component of the nexin-dynein regulatory complex (N-DRC), a key regulator of ciliary/flagellar motility which maintains the alignment and integrity of the distal axoneme and regulates microtubule sliding in motile axonemes. Binds calmodulin when cellular Ca(2+) levels are low and thereby contributes to the regulation of calcium and calmodulin-dependent protein kinase IV (CAMK4) activity; contributes to the regulation of CAMK4 signaling cascades. Required for normal axoneme assembly in sperm flagella, normal sperm tail formation and for male fertility. The protein is Dynein regulatory complex protein 9 (IQCG) of Homo sapiens (Human).